Reading from the N-terminus, the 451-residue chain is Trigger factor (451 aa).

The 86-residue stretch at 163–248 folds into the PPIase FKBP-type domain; the sequence is GDIIDMEYTV…IKALYVNILP (86 aa).

It belongs to the FKBP-type PPIase family. Tig subfamily.

The protein localises to the cytoplasm. The catalysed reaction is [protein]-peptidylproline (omega=180) = [protein]-peptidylproline (omega=0). Functionally, involved in protein export. Acts as a chaperone by maintaining the newly synthesized protein in an open conformation. Functions as a peptidyl-prolyl cis-trans isomerase. The protein is Trigger factor of Leptospira borgpetersenii serovar Hardjo-bovis (strain JB197).